Reading from the N-terminus, the 210-residue chain is Glutathione S-transferase P 2 (210 aa).

The GST N-terminal domain maps to 1 to 82; it reads SGYTLTYFPL…LLARYGLSGS (82 aa). Glutathione-binding positions include Tyr7, Arg13, Trp38, Lys46, 53–54, and 66–67; these read QI and QS. Residues 83 to 204 enclose the GST C-terminal domain; sequence NEREIAINEM…KSEGRKRRPI (122 aa).

This sequence belongs to the GST superfamily. Pi family. As to quaternary structure, homodimer. In terms of tissue distribution, liver, kidney, muscle, skin, lung and ovary.

It carries out the reaction RX + glutathione = an S-substituted glutathione + a halide anion + H(+). Its function is as follows. Conjugation of reduced glutathione to a wide number of exogenous and endogenous hydrophobic electrophiles. This is Glutathione S-transferase P 2 from Bufo bufo (European toad).